Consider the following 180-residue polypeptide: MSRIGKLPIAIPAGVTFTVTPDNVVTVKGSKGQLVKAMAKDINIAVEDNSVVVTRNDDEKKSRSLHGLTRALINNMVVGVTEGYSKTLELIGVGYRAQLQGKKLVMNLGFSHPVEIEAVEGVTFETPAATKVVIKGIDKELVGNVAADIRSWRKPEPYKGKGIKYDNEVIRRKEGKTGKK.

The protein belongs to the universal ribosomal protein uL6 family. Part of the 50S ribosomal subunit.

In terms of biological role, this protein binds to the 23S rRNA, and is important in its secondary structure. It is located near the subunit interface in the base of the L7/L12 stalk, and near the tRNA binding site of the peptidyltransferase center. This chain is Large ribosomal subunit protein uL6, found in Clostridium kluyveri (strain NBRC 12016).